The chain runs to 146 residues: Putative pre-16S rRNA nuclease (146 aa).

This sequence belongs to the YqgF nuclease family.

Its subcellular location is the cytoplasm. In terms of biological role, could be a nuclease involved in processing of the 5'-end of pre-16S rRNA. The protein is Putative pre-16S rRNA nuclease of Burkholderia mallei (strain SAVP1).